Consider the following 87-residue polypeptide: Defensin-like protein 223 (87 aa).

Positions 1 to 34 (MKSTIFVLTLLIFVSLYFNIIVYVSFSFIGTSEI) are cleaved as a signal peptide. 3 cysteine pairs are disulfide-bonded: Cys55–Cys72, Cys58–Cys77, and Cys62–Cys79.

Belongs to the DEFL family.

It localises to the secreted. This is Defensin-like protein 223 from Arabidopsis thaliana (Mouse-ear cress).